A 279-amino-acid chain; its full sequence is Probable endonuclease 4 (279 aa).

The Zn(2+) site is built by histidine 69, histidine 109, glutamate 145, aspartate 179, histidine 182, histidine 216, aspartate 229, histidine 231, and glutamate 261.

This sequence belongs to the AP endonuclease 2 family. Requires Zn(2+) as cofactor.

It carries out the reaction Endonucleolytic cleavage to 5'-phosphooligonucleotide end-products.. In terms of biological role, endonuclease IV plays a role in DNA repair. It cleaves phosphodiester bonds at apurinic or apyrimidinic (AP) sites, generating a 3'-hydroxyl group and a 5'-terminal sugar phosphate. This Desulforapulum autotrophicum (strain ATCC 43914 / DSM 3382 / VKM B-1955 / HRM2) (Desulfobacterium autotrophicum) protein is Probable endonuclease 4.